The following is a 101-amino-acid chain: Small ribosomal subunit protein uS14 (101 aa).

Belongs to the universal ribosomal protein uS14 family. Part of the 30S ribosomal subunit. Contacts proteins S3 and S10.

In terms of biological role, binds 16S rRNA, required for the assembly of 30S particles and may also be responsible for determining the conformation of the 16S rRNA at the A site. This is Small ribosomal subunit protein uS14 from Wigglesworthia glossinidia brevipalpis.